The chain runs to 341 residues: S-adenosylmethionine:tRNA ribosyltransferase-isomerase (341 aa).

This sequence belongs to the QueA family. In terms of assembly, monomer.

It is found in the cytoplasm. It carries out the reaction 7-aminomethyl-7-carbaguanosine(34) in tRNA + S-adenosyl-L-methionine = epoxyqueuosine(34) in tRNA + adenine + L-methionine + 2 H(+). Its pathway is tRNA modification; tRNA-queuosine biosynthesis. In terms of biological role, transfers and isomerizes the ribose moiety from AdoMet to the 7-aminomethyl group of 7-deazaguanine (preQ1-tRNA) to give epoxyqueuosine (oQ-tRNA). The protein is S-adenosylmethionine:tRNA ribosyltransferase-isomerase of Staphylococcus aureus (strain USA300).